We begin with the raw amino-acid sequence, 414 residues long: Serine hydroxymethyltransferase (414 aa).

Residues Leu116 and 120–122 (GHL) contribute to the (6S)-5,6,7,8-tetrahydrofolate site. N6-(pyridoxal phosphate)lysine is present on Lys224. Residues Glu240 and 348–350 (SPF) each bind (6S)-5,6,7,8-tetrahydrofolate.

This sequence belongs to the SHMT family. Homodimer. It depends on pyridoxal 5'-phosphate as a cofactor.

The protein resides in the cytoplasm. The catalysed reaction is (6R)-5,10-methylene-5,6,7,8-tetrahydrofolate + glycine + H2O = (6S)-5,6,7,8-tetrahydrofolate + L-serine. Its pathway is one-carbon metabolism; tetrahydrofolate interconversion. The protein operates within amino-acid biosynthesis; glycine biosynthesis; glycine from L-serine: step 1/1. Its function is as follows. Catalyzes the reversible interconversion of serine and glycine with tetrahydrofolate (THF) serving as the one-carbon carrier. This reaction serves as the major source of one-carbon groups required for the biosynthesis of purines, thymidylate, methionine, and other important biomolecules. Also exhibits THF-independent aldolase activity toward beta-hydroxyamino acids, producing glycine and aldehydes, via a retro-aldol mechanism. The protein is Serine hydroxymethyltransferase of Campylobacter jejuni subsp. jejuni serotype O:23/36 (strain 81-176).